A 198-amino-acid chain; its full sequence is Holliday junction resolvase RecU (198 aa).

Residues 1–22 (MVNYPHKLSSQKRQTSLSQPKN) are disordered. Polar residues predominate over residues 11–22 (QKRQTSLSQPKN). Residues Thr-81, Asp-83, Glu-96, and Gln-115 each coordinate Mg(2+).

The protein belongs to the RecU family. It depends on Mg(2+) as a cofactor.

Its subcellular location is the cytoplasm. It carries out the reaction Endonucleolytic cleavage at a junction such as a reciprocal single-stranded crossover between two homologous DNA duplexes (Holliday junction).. Its function is as follows. Endonuclease that resolves Holliday junction intermediates in genetic recombination. Cleaves mobile four-strand junctions by introducing symmetrical nicks in paired strands. Promotes annealing of linear ssDNA with homologous dsDNA. Required for DNA repair, homologous recombination and chromosome segregation. The sequence is that of Holliday junction resolvase RecU from Streptococcus pneumoniae (strain Hungary19A-6).